The primary structure comprises 202 residues: PITH domain-containing protein 1 (202 aa).

One can recognise a PITH domain in the interval 11 to 184 (SHGVDDGIEY…IVNTVYESKP (174 aa)).

Belongs to the PITHD1 family.

The polypeptide is PITH domain-containing protein 1 (Dictyostelium discoideum (Social amoeba)).